A 160-amino-acid polypeptide reads, in one-letter code: Glyoxalase domain-containing protein 5 (160 aa).

In terms of domain architecture, VOC spans 33–153 (RLDHLVLTVR…DQNLIEVSNY (121 aa)).

The protein belongs to the glyoxalase I family.

The protein is Glyoxalase domain-containing protein 5 (glod5) of Xenopus tropicalis (Western clawed frog).